An 88-amino-acid chain; its full sequence is Small ribosomal subunit protein uS15 (88 aa).

Over residues 1-12 (MLTNTDRQQVIA) the composition is skewed to polar residues. Positions 1–23 (MLTNTDRQQVIAQYQRAPGDTGS) are disordered.

It belongs to the universal ribosomal protein uS15 family. As to quaternary structure, part of the 30S ribosomal subunit. Forms a bridge to the 50S subunit in the 70S ribosome, contacting the 23S rRNA.

Its function is as follows. One of the primary rRNA binding proteins, it binds directly to 16S rRNA where it helps nucleate assembly of the platform of the 30S subunit by binding and bridging several RNA helices of the 16S rRNA. Functionally, forms an intersubunit bridge (bridge B4) with the 23S rRNA of the 50S subunit in the ribosome. The protein is Small ribosomal subunit protein uS15 of Psychrobacter sp. (strain PRwf-1).